The primary structure comprises 66 residues: Movement protein TGBp3 (66 aa).

Residues 1–2 are Lumenal-facing; sequence MD. The helical transmembrane segment at 3–23 threads the bilayer; the sequence is FTTLIIIGVYLLVFIVYFAKI. Residues 24–66 are Cytoplasmic-facing; that stretch reads NTSVCTISISGASIEISGCDNPTLFEILPKLRPFNHGLSLPSN.

The protein belongs to the Tymovirales TGBp3 protein family.

It is found in the host endoplasmic reticulum membrane. In terms of biological role, plays a role in viral cell-to-cell propagation, by facilitating genome transport to neighboring plant cells through plasmosdesmata. May induce the formation of granular vesicles derived from the Endoplasmic reticulum, which align on actin filaments. The polypeptide is Movement protein TGBp3 (Trifolium (WCMV)).